We begin with the raw amino-acid sequence, 237 residues long: Uracil-DNA glycosylase (237 aa).

The active-site Proton acceptor is the Asp-77.

The protein belongs to the uracil-DNA glycosylase (UDG) superfamily. UNG family.

The protein localises to the cytoplasm. The catalysed reaction is Hydrolyzes single-stranded DNA or mismatched double-stranded DNA and polynucleotides, releasing free uracil.. Excises uracil residues from the DNA which can arise as a result of misincorporation of dUMP residues by DNA polymerase or due to deamination of cytosine. The polypeptide is Uracil-DNA glycosylase (Acinetobacter baumannii (strain AB307-0294)).